A 562-amino-acid polypeptide reads, in one-letter code: Zinc finger protein 579 (562 aa).

The segment covering 1-11 (MDPQPPPPAQG) has biased composition (pro residues). Residues 1–43 (MDPQPPPPAQGSPPHRGRGRGRGRGRGRGRGRGRGGAGAPRAP) form a disordered region. Basic residues predominate over residues 15–33 (HRGRGRGRGRGRGRGRGRG). 3 C2H2-type zinc fingers span residues 44–66 (LPCPTCGRLFRFPYYLSRHRLSH), 72–94 (HACPLCPKAFRRPAHLSRHLRGH), and 100–123 (LRCAACPRTFPEPAQLRRHLAQEH). At R92 the chain carries Omega-N-methylarginine. A disordered region spans residues 139–203 (TAEPSWGPQD…SESEEAEAGA (65 aa)). 2 positions are modified to phosphoserine: S194 and S196. 2 C2H2-type zinc fingers span residues 270-292 (HQCSICLKAFARPWSLSRHRLVH) and 298-320 (FVCPDCGLAFRLASYLRQHRRVH). Residues 327 to 379 (APLPAAGKKDDKASGARNSAKGPEGGEGAECGGASEGGEGQNGGDAAPARPPA) form a disordered region. Positions 349–369 (PEGGEGAECGGASEGGEGQNG) are enriched in gly residues. C2H2-type zinc fingers lie at residues 384–406 (FWCPECGKGFRRRAHLRQHGVTH), 412–434 (FQCVRCQREFKRLADLARHAQVH), and 441–463 (HPCPRCPRRFSRAYSLLRHQRCH). The interval 477-562 (QAQAPTSPPP…HLRGLGGLAS (86 aa)) is disordered. Composition is skewed to pro residues over residues 482–491 (TSPPPPPPPL) and 512–525 (PSPGTPPQSPPAPP). S483 is subject to Phosphoserine.

The protein belongs to the krueppel C2H2-type zinc-finger protein family.

Its subcellular location is the nucleus. May be involved in transcriptional regulation. The sequence is that of Zinc finger protein 579 (ZNF579) from Homo sapiens (Human).